The sequence spans 122 residues: MRHYEIVFIVHPDQSEQVPAMVERYKTMIAEANGKIHRLEDWGRRQLAYPINKIHKAHYVLMNIETTPEVVEELETAFRFNDAILRHLTIKTKHAVTEASPMLGGEKAKNLLSGASEEAVAQ.

It belongs to the bacterial ribosomal protein bS6 family.

In terms of biological role, binds together with bS18 to 16S ribosomal RNA. This is Small ribosomal subunit protein bS6 (rpsF) from Neisseria meningitidis serogroup B (strain ATCC BAA-335 / MC58).